The primary structure comprises 598 residues: Glutamyl-tRNA(Gln) amidotransferase subunit E (598 aa).

Belongs to the GatB/GatE family. GatE subfamily. In terms of assembly, heterodimer of GatD and GatE.

The enzyme catalyses L-glutamyl-tRNA(Gln) + L-glutamine + ATP + H2O = L-glutaminyl-tRNA(Gln) + L-glutamate + ADP + phosphate + H(+). In terms of biological role, allows the formation of correctly charged Gln-tRNA(Gln) through the transamidation of misacylated Glu-tRNA(Gln) in organisms which lack glutaminyl-tRNA synthetase. The reaction takes place in the presence of glutamine and ATP through an activated gamma-phospho-Glu-tRNA(Gln). The GatDE system is specific for glutamate and does not act on aspartate. The sequence is that of Glutamyl-tRNA(Gln) amidotransferase subunit E from Thermoplasma volcanium (strain ATCC 51530 / DSM 4299 / JCM 9571 / NBRC 15438 / GSS1).